A 569-amino-acid polypeptide reads, in one-letter code: RNA demethylase ALKBH10B (569 aa).

The stretch at 118 to 151 (QKVAAKKAEDLKQKKTEEEAEEDLKEVVATEEEE) forms a coiled coil. A disordered region spans residues 164–190 (ENDVNGDVEDVEDDSPTSDITDSGSHQ). A compositionally biased stretch (acidic residues) spans 167–179 (VNGDVEDVEDDSP). Over residues 180–189 (TSDITDSGSH) the composition is skewed to polar residues. The Fe cation site is built by His-366, Glu-368, and His-421. Position 430 (Arg-430) interacts with 2-oxoglutarate. Basic residues predominate over residues 531-545 (KHVKHLPPRAQKKRL). Residues 531–569 (KHVKHLPPRAQKKRLLPLPPAASSSPAGGSTSEPVITVG) form a disordered region. The span at 551-560 (AASSSPAGGS) shows a compositional bias: low complexity.

The protein belongs to the alkB family. The cofactor is Fe(2+).

The enzyme catalyses an N(6)-methyladenosine in mRNA + 2-oxoglutarate + O2 = an adenosine in mRNA + formaldehyde + succinate + CO2. In terms of biological role, dioxygenase that demethylates RNA by oxidative demethylation: specifically demethylates N(6)-methyladenosine (m6A) RNA, the most prevalent internal modification of messenger RNA (mRNA) in higher eukaryotes. ALKBH10B-mediated mRNA m6A demethylation stabilizes the mRNA of the key flowering time regulators FT, SPL3 and SPL9, which are involved in the control of floral transition. The polypeptide is RNA demethylase ALKBH10B (Arabidopsis thaliana (Mouse-ear cress)).